The chain runs to 344 residues: MENPSLISLKKISRCFNTTTDICALDNLSLNIHAGEILGIIGRSGAGKSTLIRCLNGLERIDAGSIFFEGVNVSNLSETEWAPYRQRIGMIFQHFNLLSSQNILNNIALPLKLTGINKKQRHKRALELIELVGLCGKEYCYPAELSGGQKQRVGIARSLAANPKILLSDEATSALDPETTQSILELLADINKRLNLTIVLITHEMEVVRAIAHRVVVLNQGRIVEEGRVKDIFTSPQDDTTIAMLKLVTPQLPEKFAKNLKPRGQEAIIEINIAGEITQQPFLNLLEDEIGLRARILHGGIDTVQGETIGRLFLGLPAQNQEALKKAVQWLTEKGRYCEVLGYV.

The ABC transporter domain occupies I7 to L245. G42–S49 contributes to the ATP binding site.

This sequence belongs to the ABC transporter superfamily. Methionine importer (TC 3.A.1.24) family. As to quaternary structure, the complex is composed of two ATP-binding proteins (MetN), two transmembrane proteins (MetI) and a solute-binding protein (MetQ).

It is found in the cell inner membrane. The enzyme catalyses L-methionine(out) + ATP + H2O = L-methionine(in) + ADP + phosphate + H(+). The catalysed reaction is D-methionine(out) + ATP + H2O = D-methionine(in) + ADP + phosphate + H(+). In terms of biological role, part of the ABC transporter complex MetNIQ involved in methionine import. Responsible for energy coupling to the transport system. This is Methionine import ATP-binding protein MetN from Bartonella henselae (strain ATCC 49882 / DSM 28221 / CCUG 30454 / Houston 1) (Rochalimaea henselae).